The primary structure comprises 505 residues: Geissoschizine oxidase (505 aa).

A helical membrane pass occupies residues 9 to 29 (FSSPAFFLLLPFLFLLIKPLI). Cysteine 443 lines the heme pocket.

It belongs to the cytochrome P450 family. It depends on heme as a cofactor. As to expression, mainly expressed in roots.

The protein localises to the membrane. It carries out the reaction (19E)-geissoschizine + reduced [NADPH--hemoprotein reductase] + O2 = akuammicine + formate + oxidized [NADPH--hemoprotein reductase] + H2O + H(+). It catalyses the reaction (19E)-geissoschizine + reduced [NADPH--hemoprotein reductase] + O2 = 3,17-didehydrostemmadenine + oxidized [NADPH--hemoprotein reductase] + 2 H2O. The catalysed reaction is 3,17-didehydrostemmadenine = 17-dehydropreakuammicine. It participates in alkaloid biosynthesis. In terms of biological role, monooxygenase involved in the biosynthesis of curare monoterpene indole alkaloids (MIAs), natural products such as strychnine, a neurotoxic compound used as a pesticide to control rodents, and its pharmacologically active derivatives, including brucine, used to regulate blood pressure. Curare alkaloids act as animal glycine receptor antagonists. Catalyzes the conversion of geissoschizine to dehydropreakuammicine by cyclization, which is spontaneously converted into akuammicine by aromatization. The polypeptide is Geissoschizine oxidase (Strychnos nux-vomica (Poison nut)).